We begin with the raw amino-acid sequence, 212 residues long: Soluble inorganic pyrophosphatase 1 (212 aa).

The substrate site is built by Lys62 and Arg76. Residue Tyr84 is the Proton donor of the active site. Tyr88 provides a ligand contact to substrate. Residues Asp98, Asp103, and Asp135 each coordinate Mg(2+). Substrate is bound at residue Tyr172.

The protein belongs to the PPase family. Monomer. The cofactor is Mg(2+). As to expression, ubiquitous. Lower level of expression in ovary, stigma and pollen.

The protein localises to the cytoplasm. It catalyses the reaction diphosphate + H2O = 2 phosphate + H(+). With respect to regulation, inhibited by Zn(2+), Ca(2+), Ba(2+), Fe(2+), Co(2+), Cu(2+), Eu(2+), Eu(3+) and Mn(2+). Its function is as follows. Catalyzes the irreversible hydrolysis of pyrophosphate (PPi) to phosphate. The MgPPi(2-) complex binds to the enzyme only after a free Mg(2+) ion has bound. No activity with glycerol-3-phosphate, glucose-6-phosphate, p-nitrophenylphosphate, ADP, NADP(+), NAD(+),NADH, NADPH or phosphoribosyl pyrophosphate as substrates. Controls the equilibrium of gluconeogenic reactions in the heterotrophic growth phase of early seedling establishment. Determinates the rate of cytosolic glycolysis, providing carbon for seed storage lipid accumulation. The protein is Soluble inorganic pyrophosphatase 1 of Arabidopsis thaliana (Mouse-ear cress).